We begin with the raw amino-acid sequence, 316 residues long: Actinorhodin polyketide synthase bifunctional cyclase/dehydratase (316 aa).

It participates in antibiotic biosynthesis; actinorhodin biosynthesis. Functionally, is needed for correct cyclization of the oligoketide leading to isochromanequinone formation. The polypeptide is Actinorhodin polyketide synthase bifunctional cyclase/dehydratase (Streptomyces coelicolor (strain ATCC BAA-471 / A3(2) / M145)).